The following is a 532-amino-acid chain: Bone morphogenetic protein receptor type-1A (532 aa).

An N-terminal signal peptide occupies residues 1–23 (MTQLYTYIRLLGACLFIISHVQG). The Extracellular segment spans residues 24-152 (QNLDSMLHGT…IGPFFDGSVR (129 aa)). Intrachain disulfides connect Cys-61/Cys-82, Cys-63/Cys-67, and Cys-76/Cys-100. Asn-73 is a glycosylation site (N-linked (GlcNAc...) asparagine). Residues 107–109 (DFQ) are mediates specificity for BMP ligand. Intrachain disulfides connect Cys-110–Cys-124 and Cys-125–Cys-130. Residues 153–176 (WLAVLISMAVCIVAMIVFSSCFCY) form a helical membrane-spanning segment. Over 177–532 (KHYCKSISSR…KMVESQDVKI (356 aa)) the chain is Cytoplasmic. The GS domain occupies 204-233 (ESLKDLIDQSQSSGSGSGLPLLVQRTIAKQ). A Protein kinase domain is found at 234 to 525 (IQMVRQVGKG…RIKKTLAKMV (292 aa)). Residues 240–248 (VGKGRYGEV) and Lys-261 each bind ATP. Asp-362 serves as the catalytic Proton acceptor.

Belongs to the protein kinase superfamily. TKL Ser/Thr protein kinase family. TGFB receptor subfamily. In terms of assembly, interacts with low affinity with GDF5; positively regulates chondrocyte differentiation. Interacts with BMP4. Interacts with SCUBE3. Interacts with TSC22D1/TSC-22. Interacts with BMP2; the interaction may induce HAMP expression. Interacts with BMP6. Interacts with heterodimers composed of BMP2 and BMP6 in vitro; the interaction may induce HAMP expression. Requires Mg(2+) as cofactor. It depends on Mn(2+) as a cofactor. Post-translationally, glycosylated.

The protein resides in the cell membrane. Its subcellular location is the cell surface. The enzyme catalyses L-threonyl-[receptor-protein] + ATP = O-phospho-L-threonyl-[receptor-protein] + ADP + H(+). The catalysed reaction is L-seryl-[receptor-protein] + ATP = O-phospho-L-seryl-[receptor-protein] + ADP + H(+). Functionally, on ligand binding, forms a receptor complex consisting of two type II and two type I transmembrane serine/threonine kinases. Type II receptors phosphorylate and activate type I receptors which autophosphorylate, then bind and activate SMAD transcriptional regulators. Receptor for BMP2, BMP4, GDF5 and GDF6. Positively regulates chondrocyte differentiation through GDF5 interaction. Mediates induction of adipogenesis by GDF6. May promote the expression of HAMP, potentially via its interaction with BMP2. The protein is Bone morphogenetic protein receptor type-1A (Bmpr1a) of Rattus norvegicus (Rat).